The following is a 448-amino-acid chain: Protein Z-dependent protease inhibitor (448 aa).

Residues methionine 1–serine 21 form the signal peptide. The segment at valine 33–glutamate 70 is disordered. Residues arginine 54–lysine 63 are compositionally biased toward acidic residues. Residue asparagine 81 is glycosylated (N-linked (GlcNAc...) asparagine). The tract at residues alanine 140–serine 157 is heparin-binding. Asparagine 184, asparagine 278, and asparagine 299 each carry an N-linked (GlcNAc...) asparagine glycan.

Belongs to the serpin family. Post-translationally, phosphorylated by FAM20C in the extracellular medium. Detectable in liver, but not in heart, brain, spleen, lung, kidney, skeletal muscle or testes.

The protein resides in the secreted. In terms of biological role, inhibits activity of the coagulation protease factor Xa in the presence of PROZ, calcium and phospholipids. Also inhibits factor XIa in the absence of cofactors. In Mus musculus (Mouse), this protein is Protein Z-dependent protease inhibitor (Serpina10).